Reading from the N-terminus, the 384-residue chain is Galactokinase (384 aa).

A substrate-binding site is contributed by 34–37 (EHTD). 123 to 129 (SSGLSSS) is a binding site for ATP. Positions 129 and 161 each coordinate Mg(2+). Catalysis depends on Asp-173, which acts as the Proton acceptor. Tyr-222 provides a ligand contact to substrate.

Belongs to the GHMP kinase family. GalK subfamily.

The protein resides in the cytoplasm. It catalyses the reaction alpha-D-galactose + ATP = alpha-D-galactose 1-phosphate + ADP + H(+). It functions in the pathway carbohydrate metabolism; galactose metabolism. In terms of biological role, catalyzes the transfer of the gamma-phosphate of ATP to D-galactose to form alpha-D-galactose-1-phosphate (Gal-1-P). This is Galactokinase from Actinobacillus pleuropneumoniae serotype 5b (strain L20).